The following is a 524-amino-acid chain: Caffeate CoA-transferase (524 aa).

The active-site 5-glutamyl coenzyme A thioester intermediate is the Glu-323.

The protein belongs to the 3-oxoacid CoA-transferase family. Homodimer.

The enzyme catalyses hydrocaffeoyl-CoA + (E)-caffeate = 3-(3,4-dihydroxyphenyl)propanoate + (E)-caffeoyl-CoA. Involved in caffeate respiration, which consists in the reduction of the C-C double bond of caffeate. CarA catalyzes an energy-saving CoA loop for caffeate activation in the steady state of caffeate respiration. It catalyzes the formation of caffeyl-CoA from caffeate with hydrocaffeyl-CoA as the CoA donor via a ping-pong mechanism. In addition to caffeate, the enzyme can utilize 4-coumarate or ferulate as CoA acceptor. Neither acetyl-CoA nor butyryl-CoA served as the CoA donor. This Acetobacterium woodii protein is Caffeate CoA-transferase.